Reading from the N-terminus, the 617-residue chain is Dihydroxy-acid dehydratase (617 aa).

Asp81 serves as a coordination point for Mg(2+). Cys122 provides a ligand contact to [2Fe-2S] cluster. 2 residues coordinate Mg(2+): Asp123 and Lys124. Lys124 is subject to N6-carboxylysine. [2Fe-2S] cluster is bound at residue Cys195. A Mg(2+)-binding site is contributed by Glu491. Ser517 acts as the Proton acceptor in catalysis.

It belongs to the IlvD/Edd family. In terms of assembly, homodimer. The cofactor is [2Fe-2S] cluster. Mg(2+) serves as cofactor.

It catalyses the reaction (2R)-2,3-dihydroxy-3-methylbutanoate = 3-methyl-2-oxobutanoate + H2O. The catalysed reaction is (2R,3R)-2,3-dihydroxy-3-methylpentanoate = (S)-3-methyl-2-oxopentanoate + H2O. The protein operates within amino-acid biosynthesis; L-isoleucine biosynthesis; L-isoleucine from 2-oxobutanoate: step 3/4. It functions in the pathway amino-acid biosynthesis; L-valine biosynthesis; L-valine from pyruvate: step 3/4. Functions in the biosynthesis of branched-chain amino acids. Catalyzes the dehydration of (2R,3R)-2,3-dihydroxy-3-methylpentanoate (2,3-dihydroxy-3-methylvalerate) into 2-oxo-3-methylpentanoate (2-oxo-3-methylvalerate) and of (2R)-2,3-dihydroxy-3-methylbutanoate (2,3-dihydroxyisovalerate) into 2-oxo-3-methylbutanoate (2-oxoisovalerate), the penultimate precursor to L-isoleucine and L-valine, respectively. The sequence is that of Dihydroxy-acid dehydratase from Nitrosococcus oceani (strain ATCC 19707 / BCRC 17464 / JCM 30415 / NCIMB 11848 / C-107).